Here is a 252-residue protein sequence, read N- to C-terminus: Isoprenyl transferase 2 (252 aa).

D26 is a catalytic residue. D26 lines the Mg(2+) pocket. Substrate is bound by residues G27–R30, W31, R39, H43, and S71–E73. N74 serves as the catalytic Proton acceptor. Substrate-binding positions include W75, R77, R194, and R200–S202. E213 lines the Mg(2+) pocket.

This sequence belongs to the UPP synthase family. Homodimer. It depends on Mg(2+) as a cofactor.

In terms of biological role, catalyzes the condensation of isopentenyl diphosphate (IPP) with allylic pyrophosphates generating different type of terpenoids. The chain is Isoprenyl transferase 2 from Bradyrhizobium diazoefficiens (strain JCM 10833 / BCRC 13528 / IAM 13628 / NBRC 14792 / USDA 110).